Here is a 31-residue protein sequence, read N- to C-terminus: Photosystem II reaction center protein M (31 aa).

The helical transmembrane segment at 5-25 (ILALMATALFIIIPTAFLIIL) threads the bilayer.

The protein belongs to the PsbM family. In terms of assembly, PSII is composed of 1 copy each of membrane proteins PsbA, PsbB, PsbC, PsbD, PsbE, PsbF, PsbH, PsbI, PsbJ, PsbK, PsbL, PsbM, PsbT, PsbX, PsbY, PsbZ, Psb30/Ycf12, at least 3 peripheral proteins of the oxygen-evolving complex and a large number of cofactors. It forms dimeric complexes.

It is found in the plastid. It localises to the chloroplast thylakoid membrane. In terms of biological role, one of the components of the core complex of photosystem II (PSII). PSII is a light-driven water:plastoquinone oxidoreductase that uses light energy to abstract electrons from H(2)O, generating O(2) and a proton gradient subsequently used for ATP formation. It consists of a core antenna complex that captures photons, and an electron transfer chain that converts photonic excitation into a charge separation. This subunit is found at the monomer-monomer interface. This is Photosystem II reaction center protein M from Mesostigma viride (Green alga).